The following is a 382-amino-acid chain: Ribosomal RNA large subunit methyltransferase G (382 aa).

It belongs to the methyltransferase superfamily. RlmG family.

Its subcellular location is the cytoplasm. The catalysed reaction is guanosine(1835) in 23S rRNA + S-adenosyl-L-methionine = N(2)-methylguanosine(1835) in 23S rRNA + S-adenosyl-L-homocysteine + H(+). Its function is as follows. Specifically methylates the guanine in position 1835 (m2G1835) of 23S rRNA. This Pseudoalteromonas translucida (strain TAC 125) protein is Ribosomal RNA large subunit methyltransferase G.